The following is a 40-amino-acid chain: Fibrinolytic protease (40 aa).

Residues 1–40 form the Peptidase S1 domain; it reads IVGGNEVTPHAYPWQVGLFIDDMYFCGGSISVTLTGWGKP.

It belongs to the peptidase S1 family.

It localises to the secreted. It is found in the extracellular space. Its function is as follows. Serine protease with fibrinolytic activity. The chain is Fibrinolytic protease from Euphausia superba (Antarctic krill).